Consider the following 100-residue polypeptide: Protein RnfH (100 aa).

The protein belongs to the UPF0125 (RnfH) family.

The sequence is that of Protein RnfH from Pseudomonas paraeruginosa (strain DSM 24068 / PA7) (Pseudomonas aeruginosa (strain PA7)).